The chain runs to 117 residues: Large ribosomal subunit protein bL19 (117 aa).

Belongs to the bacterial ribosomal protein bL19 family.

Its function is as follows. This protein is located at the 30S-50S ribosomal subunit interface and may play a role in the structure and function of the aminoacyl-tRNA binding site. In Mycoplasmopsis pulmonis (strain UAB CTIP) (Mycoplasma pulmonis), this protein is Large ribosomal subunit protein bL19.